A 557-amino-acid polypeptide reads, in one-letter code: MLSDIEIARAATLKPITEIAGRLNIPDESVLSYGHTIAKLDGEYLNSLSSKPRGKLVLVSAITPTPAGEGKTTTTVGLGDAFNRIGKKAVICLREPSLGPCFGVKGGAAGGGYAQVVPMERINLHFTGDFHAITSAHDLLAAMIDNHVHWGNEPVMDRNSITFRRVIDMNDRMLRNMVIGLGGKANGYPREGGFDISVASEVMAILCLASDLKDLRSRLERIIIGEDNDHNPVAAAKIKAAGAMTALLKDALQPNLVQTLEGNPALIHGGPFANIAHGCNSLIATKAALHLGDIAITEAGFGADLGAEKFFDIKCRQANLEPDAVVLVATIRALKMHGGVALADLKNENIAALETGFANLARHAENLAKFGVKTVVAINRFHSDTEAELDKLQDLCASIGLDSAVCTHFTDGGAGAEDLARKLSAILDAPKEDSFRLLYPDEMPLWKKIETIAKEIYRAGEVVPQGTVLKKLKSFEEQGFGDLPVCIAKTQSSFSADPKAKNAPTGHIFPIREVRLNAGAGFIVAISGNIMTMPGLPRHPAAENIDINEDNEIIGLA.

Residue Thr-65–Thr-72 coordinates ATP.

The protein belongs to the formate--tetrahydrofolate ligase family.

It catalyses the reaction (6S)-5,6,7,8-tetrahydrofolate + formate + ATP = (6R)-10-formyltetrahydrofolate + ADP + phosphate. It functions in the pathway one-carbon metabolism; tetrahydrofolate interconversion. This Zymomonas mobilis subsp. mobilis (strain ATCC 31821 / ZM4 / CP4) protein is Formate--tetrahydrofolate ligase.